Consider the following 544-residue polypeptide: Chaperonin GroEL (544 aa).

Residues 30-33, Lys-51, 87-91, Gly-415, and Asp-495 each bind ATP; these read TLGP and DGTTT.

It belongs to the chaperonin (HSP60) family. In terms of assembly, forms a cylinder of 14 subunits composed of two heptameric rings stacked back-to-back. Interacts with the co-chaperonin GroES.

It is found in the cytoplasm. The enzyme catalyses ATP + H2O + a folded polypeptide = ADP + phosphate + an unfolded polypeptide.. In terms of biological role, together with its co-chaperonin GroES, plays an essential role in assisting protein folding. The GroEL-GroES system forms a nano-cage that allows encapsulation of the non-native substrate proteins and provides a physical environment optimized to promote and accelerate protein folding. The protein is Chaperonin GroEL of Neisseria meningitidis serogroup B (strain ATCC BAA-335 / MC58).